The following is a 289-amino-acid chain: 4-hydroxy-tetrahydrodipicolinate synthase (289 aa).

T46 provides a ligand contact to pyruvate. Y134 acts as the Proton donor/acceptor in catalysis. Catalysis depends on K162, which acts as the Schiff-base intermediate with substrate. V204 contributes to the pyruvate binding site.

The protein belongs to the DapA family. Homotetramer; dimer of dimers.

Its subcellular location is the cytoplasm. It carries out the reaction L-aspartate 4-semialdehyde + pyruvate = (2S,4S)-4-hydroxy-2,3,4,5-tetrahydrodipicolinate + H2O + H(+). Its pathway is amino-acid biosynthesis; L-lysine biosynthesis via DAP pathway; (S)-tetrahydrodipicolinate from L-aspartate: step 3/4. Its function is as follows. Catalyzes the condensation of (S)-aspartate-beta-semialdehyde [(S)-ASA] and pyruvate to 4-hydroxy-tetrahydrodipicolinate (HTPA). This chain is 4-hydroxy-tetrahydrodipicolinate synthase, found in Bacillus velezensis (strain DSM 23117 / BGSC 10A6 / LMG 26770 / FZB42) (Bacillus amyloliquefaciens subsp. plantarum).